Here is a 161-residue protein sequence, read N- to C-terminus: Peroxynitrite isomerase 2 (161 aa).

Residues 17-23 (GTWAGQG) carry the GXWXGXG motif. Residue histidine 152 coordinates heme b.

It belongs to the nitrobindin family. As to quaternary structure, homodimer. The cofactor is heme b.

It carries out the reaction peroxynitrite = nitrate. It participates in nitrogen metabolism. In terms of biological role, heme-binding protein able to scavenge peroxynitrite and to protect free L-tyrosine against peroxynitrite-mediated nitration, by acting as a peroxynitrite isomerase that converts peroxynitrite to nitrate. Therefore, this protein likely plays a role in peroxynitrite sensing and in the detoxification of reactive nitrogen and oxygen species (RNS and ROS, respectively). Is able to bind nitric oxide (NO) in vitro, but may act as a sensor of peroxynitrite levels in vivo. This is Peroxynitrite isomerase 2 from Mycobacterium marinum (strain ATCC BAA-535 / M).